Consider the following 475-residue polypeptide: UDP-N-acetylmuramoylalanine--D-glutamate ligase (475 aa).

130-136 (GTNGKTT) contacts ATP.

The protein belongs to the MurCDEF family.

It localises to the cytoplasm. The catalysed reaction is UDP-N-acetyl-alpha-D-muramoyl-L-alanine + D-glutamate + ATP = UDP-N-acetyl-alpha-D-muramoyl-L-alanyl-D-glutamate + ADP + phosphate + H(+). The protein operates within cell wall biogenesis; peptidoglycan biosynthesis. Its function is as follows. Cell wall formation. Catalyzes the addition of glutamate to the nucleotide precursor UDP-N-acetylmuramoyl-L-alanine (UMA). The polypeptide is UDP-N-acetylmuramoylalanine--D-glutamate ligase (Corynebacterium efficiens (strain DSM 44549 / YS-314 / AJ 12310 / JCM 11189 / NBRC 100395)).